The chain runs to 752 residues: MRFVSLAVGAALLGAAGASSISSNVGLLKANGVALGNWEAAYEKASAFVSGLTTDQKLALITGSNVESTNGNFTPLYFLDGDMGLQDFYYVSAFSLSSALAMTWDRDAIYEQAKAVGSEFYNKGVQVVAGPTSQPLGRTPWGGRGVEGFGPDPYLNGLATGLTTKGYVDAGVIPGGKHFLLYEQETNRTSSFGSSGEGSPYSSNADDKTIHETYLWPFYDAVKNGAGAVMCAMTKVNGTMACENSDLLMKMLKTELGFPGMVWPDMNGQNSAKGSALGGEDYGSSSIWSTSTMESFLSNGTLSEARLNDMAIRNLIGYYYVNLDNGRQPTRQTTDVYVDVRANHSKLIRENGAKSMALLKNEGVLPLSKPRVMSIFGAHAGPIMGGPNSNVDVMGSGPTYQGHLATGSGSGMASMPYLITPYGALTNKAAQDGTVLRWVLNDTYSSGGGSSLVPSSTSSTAVEPSFENFATGSDICLVFINALAGEGADRTELYNADQDAMVNTVADNCNNTVAVVNTVGPRLLDQWIEHDNVTAVLYGSLLGQESGNSIVDLLYGDVNPSGRLVHTIAKNESDYNVGLCYTAQCNFTEGVYLDYRYFDAHNITPRYPFGHGLSYTTFHYSSLAIKAPSSITKAPKGNLTVGGPSDLWDVVGTVSARIANNGTLSGAEVPQLYLGFPDSADQPVRQLRGFDRVELSAGQEAVVTFNLRRRDISYWNVKTQQWMVAGGKYTVFVGGSSRDLRLNGTFFLWVGS.

Residues Met-1–Ala-18 form the signal peptide. 2 N-linked (GlcNAc...) asparagine glycosylation sites follow: Asn-187 and Asn-237. Asp-265 is a catalytic residue. N-linked (GlcNAc...) asparagine glycosylation is found at Asn-299, Asn-343, Asn-441, Asn-510, Asn-532, Asn-571, Asn-586, Asn-638, Asn-661, and Asn-743.

The protein belongs to the glycosyl hydrolase 3 family.

Its subcellular location is the secreted. The enzyme catalyses Hydrolysis of terminal, non-reducing beta-D-glucosyl residues with release of beta-D-glucose.. It participates in glycan metabolism; cellulose degradation. Its function is as follows. Beta-glucosidases are one of a number of cellulolytic enzymes involved in the degradation of cellulosic biomass. Catalyzes the last step releasing glucose from the inhibitory cellobiose. The sequence is that of Probable beta-glucosidase D (bglD) from Aspergillus flavus (strain ATCC 200026 / FGSC A1120 / IAM 13836 / NRRL 3357 / JCM 12722 / SRRC 167).